Here is a 739-residue protein sequence, read N- to C-terminus: Phosphoribosylformylglycinamidine synthase subunit PurL (739 aa).

H54 is an active-site residue. ATP is bound by residues Y57 and K96. E98 serves as a coordination point for Mg(2+). Residues 99–102 (SHNH) and R121 each bind substrate. H100 acts as the Proton acceptor in catalysis. D122 is a binding site for Mg(2+). A substrate-binding site is contributed by Q245. D273 lines the Mg(2+) pocket. 317–319 (ESQ) contacts substrate. Residues D500 and G537 each coordinate ATP. N538 serves as a coordination point for Mg(2+). S540 lines the substrate pocket.

The protein belongs to the FGAMS family. As to quaternary structure, monomer. Part of the FGAM synthase complex composed of 1 PurL, 1 PurQ and 2 PurS subunits.

The protein resides in the cytoplasm. It carries out the reaction N(2)-formyl-N(1)-(5-phospho-beta-D-ribosyl)glycinamide + L-glutamine + ATP + H2O = 2-formamido-N(1)-(5-O-phospho-beta-D-ribosyl)acetamidine + L-glutamate + ADP + phosphate + H(+). The protein operates within purine metabolism; IMP biosynthesis via de novo pathway; 5-amino-1-(5-phospho-D-ribosyl)imidazole from N(2)-formyl-N(1)-(5-phospho-D-ribosyl)glycinamide: step 1/2. Functionally, part of the phosphoribosylformylglycinamidine synthase complex involved in the purines biosynthetic pathway. Catalyzes the ATP-dependent conversion of formylglycinamide ribonucleotide (FGAR) and glutamine to yield formylglycinamidine ribonucleotide (FGAM) and glutamate. The FGAM synthase complex is composed of three subunits. PurQ produces an ammonia molecule by converting glutamine to glutamate. PurL transfers the ammonia molecule to FGAR to form FGAM in an ATP-dependent manner. PurS interacts with PurQ and PurL and is thought to assist in the transfer of the ammonia molecule from PurQ to PurL. The sequence is that of Phosphoribosylformylglycinamidine synthase subunit PurL from Bacillus cereus (strain ZK / E33L).